A 161-amino-acid chain; its full sequence is 2-C-methyl-D-erythritol 2,4-cyclodiphosphate synthase (161 aa).

A divalent metal cation is bound by residues D9 and H11. Residues 9 to 11 (DFH) and 37 to 38 (HS) each bind 4-CDP-2-C-methyl-D-erythritol 2-phosphate. H45 serves as a coordination point for a divalent metal cation. Residues 59 to 61 (DIG), 64 to 68 (FPDTD), 135 to 138 (TTTE), and R145 each bind 4-CDP-2-C-methyl-D-erythritol 2-phosphate.

Belongs to the IspF family. Homotrimer. A divalent metal cation serves as cofactor.

It carries out the reaction 4-CDP-2-C-methyl-D-erythritol 2-phosphate = 2-C-methyl-D-erythritol 2,4-cyclic diphosphate + CMP. It functions in the pathway isoprenoid biosynthesis; isopentenyl diphosphate biosynthesis via DXP pathway; isopentenyl diphosphate from 1-deoxy-D-xylulose 5-phosphate: step 4/6. Involved in the biosynthesis of isopentenyl diphosphate (IPP) and dimethylallyl diphosphate (DMAPP), two major building blocks of isoprenoid compounds. Catalyzes the conversion of 4-diphosphocytidyl-2-C-methyl-D-erythritol 2-phosphate (CDP-ME2P) to 2-C-methyl-D-erythritol 2,4-cyclodiphosphate (ME-CPP) with a corresponding release of cytidine 5-monophosphate (CMP). This chain is 2-C-methyl-D-erythritol 2,4-cyclodiphosphate synthase, found in Leptospira interrogans serogroup Icterohaemorrhagiae serovar copenhageni (strain Fiocruz L1-130).